A 305-amino-acid chain; its full sequence is N-acetylmuramic acid 6-phosphate etherase (305 aa).

In terms of domain architecture, SIS spans A54–K217. Catalysis depends on E82, which acts as the Proton donor. E113 is an active-site residue.

Belongs to the GCKR-like family. MurNAc-6-P etherase subfamily. As to quaternary structure, homodimer.

It carries out the reaction N-acetyl-D-muramate 6-phosphate + H2O = N-acetyl-D-glucosamine 6-phosphate + (R)-lactate. The protein operates within amino-sugar metabolism; N-acetylmuramate degradation. Specifically catalyzes the cleavage of the D-lactyl ether substituent of MurNAc 6-phosphate, producing GlcNAc 6-phosphate and D-lactate. This Deinococcus radiodurans (strain ATCC 13939 / DSM 20539 / JCM 16871 / CCUG 27074 / LMG 4051 / NBRC 15346 / NCIMB 9279 / VKM B-1422 / R1) protein is N-acetylmuramic acid 6-phosphate etherase.